A 120-amino-acid chain; its full sequence is Fluoride-specific ion channel FluC (120 aa).

3 helical membrane passes run 30–50 (FGTL…YGLL), 66–86 (VGFL…LLLL), and 96–116 (LNII…LQLV). The Na(+) site is built by G70 and T73.

The protein belongs to the fluoride channel Fluc/FEX (TC 1.A.43) family.

It is found in the cell inner membrane. The catalysed reaction is fluoride(in) = fluoride(out). With respect to regulation, na(+) is not transported, but it plays an essential structural role and its presence is essential for fluoride channel function. Its function is as follows. Fluoride-specific ion channel. Important for reducing fluoride concentration in the cell, thus reducing its toxicity. This is Fluoride-specific ion channel FluC from Pseudoalteromonas translucida (strain TAC 125).